The chain runs to 331 residues: Glucokinase (331 aa).

Residue 13–18 participates in ATP binding; the sequence is GDIGGT.

It belongs to the bacterial glucokinase family.

The protein resides in the cytoplasm. It carries out the reaction D-glucose + ATP = D-glucose 6-phosphate + ADP + H(+). The chain is Glucokinase from Caulobacter vibrioides (strain ATCC 19089 / CIP 103742 / CB 15) (Caulobacter crescentus).